A 56-amino-acid chain; its full sequence is Large ribosomal subunit protein bL32 (56 aa).

Residues 1–39 (MAVQQNKKSRSKRGMRRSHDSLSTAQLSVDATSGELHRR) form a disordered region. Residues 7–16 (KKSRSKRGMR) are compositionally biased toward basic residues. Residues 21-31 (SLSTAQLSVDA) are compositionally biased toward polar residues.

It belongs to the bacterial ribosomal protein bL32 family.

This Shewanella piezotolerans (strain WP3 / JCM 13877) protein is Large ribosomal subunit protein bL32.